The chain runs to 180 residues: ATP synthase subunit delta (180 aa).

This sequence belongs to the ATPase delta chain family. In terms of assembly, F-type ATPases have 2 components, F(1) - the catalytic core - and F(0) - the membrane proton channel. F(1) has five subunits: alpha(3), beta(3), gamma(1), delta(1), epsilon(1). F(0) has three main subunits: a(1), b(2) and c(10-14). The alpha and beta chains form an alternating ring which encloses part of the gamma chain. F(1) is attached to F(0) by a central stalk formed by the gamma and epsilon chains, while a peripheral stalk is formed by the delta and b chains.

It localises to the cell inner membrane. Its function is as follows. F(1)F(0) ATP synthase produces ATP from ADP in the presence of a proton or sodium gradient. F-type ATPases consist of two structural domains, F(1) containing the extramembraneous catalytic core and F(0) containing the membrane proton channel, linked together by a central stalk and a peripheral stalk. During catalysis, ATP synthesis in the catalytic domain of F(1) is coupled via a rotary mechanism of the central stalk subunits to proton translocation. Functionally, this protein is part of the stalk that links CF(0) to CF(1). It either transmits conformational changes from CF(0) to CF(1) or is implicated in proton conduction. The sequence is that of ATP synthase subunit delta from Geobacter metallireducens (strain ATCC 53774 / DSM 7210 / GS-15).